The chain runs to 429 residues: Enolase (429 aa).

Gln-162 is a (2R)-2-phosphoglycerate binding site. The active-site Proton donor is the Glu-204. 3 residues coordinate Mg(2+): Asp-241, Glu-282, and Asp-309. The (2R)-2-phosphoglycerate site is built by Lys-334, Arg-363, Ser-364, and Lys-385. Residue Lys-334 is the Proton acceptor of the active site.

It belongs to the enolase family. Mg(2+) serves as cofactor.

Its subcellular location is the cytoplasm. It localises to the secreted. The protein resides in the cell surface. The catalysed reaction is (2R)-2-phosphoglycerate = phosphoenolpyruvate + H2O. It functions in the pathway carbohydrate degradation; glycolysis; pyruvate from D-glyceraldehyde 3-phosphate: step 4/5. Its function is as follows. Catalyzes the reversible conversion of 2-phosphoglycerate (2-PG) into phosphoenolpyruvate (PEP). It is essential for the degradation of carbohydrates via glycolysis. This chain is Enolase, found in Acidothermus cellulolyticus (strain ATCC 43068 / DSM 8971 / 11B).